The primary structure comprises 234 residues: Putative B3 domain-containing protein At2g18810 (234 aa).

The interval 55-88 is disordered; it reads CKNQDPEQNPNRVASSPSLCHVKSKRPQKGVSNK. Over residues 60–72 the composition is skewed to polar residues; that stretch reads PEQNPNRVASSPS. Residues 87 to 185 constitute a DNA-binding region (TF-B3); sequence NKPILDMDFL…MLFFALVLSD (99 aa).

It localises to the nucleus. The chain is Putative B3 domain-containing protein At2g18810 from Arabidopsis thaliana (Mouse-ear cress).